The following is a 331-amino-acid chain: Fructose-1,6-bisphosphatase class 1 2 (331 aa).

Mg(2+) contacts are provided by glutamate 80, aspartate 98, leucine 100, and aspartate 101. Substrate-binding positions include 101-104 (DGSS) and asparagine 189. Glutamate 261 lines the Mg(2+) pocket.

This sequence belongs to the FBPase class 1 family. Homotetramer. It depends on Mg(2+) as a cofactor.

It is found in the cytoplasm. The catalysed reaction is beta-D-fructose 1,6-bisphosphate + H2O = beta-D-fructose 6-phosphate + phosphate. It participates in carbohydrate biosynthesis; Calvin cycle. This Cereibacter sphaeroides (strain ATCC 17029 / ATH 2.4.9) (Rhodobacter sphaeroides) protein is Fructose-1,6-bisphosphatase class 1 2.